Consider the following 309-residue polypeptide: Large ribosomal subunit protein mL45 (309 aa).

Belongs to the mitochondrion-specific ribosomal protein mL45 family. In terms of assembly, component of the mitochondrial ribosome large subunit (39S) which comprises a 16S rRNA and about 50 distinct proteins.

The protein localises to the mitochondrion. Functionally, component of the mitochondrial large ribosomal subunit (mt-LSU). Within the mitochondrial ribosomes, required to direct the nascent polypeptide toward the tunnel exit and position the exit at a distance from the membrane surface. This chain is Large ribosomal subunit protein mL45 (mrpl45), found in Xenopus laevis (African clawed frog).